The primary structure comprises 326 residues: Putative ABC transporter ATP-binding protein MA_4020 (326 aa).

Over residues 1 to 12 (MTISTLSSSYGN) the composition is skewed to polar residues. Positions 1–34 (MTISTLSSSYGNAQDVPAEDSDRHGSIEPGSEKA) are disordered. One can recognise an ABC transporter domain in the interval 46–281 (LEVKNLCHRY…PELLRKAHLR (236 aa)). ATP is bound at residue 80–87 (GANGAGKS).

It belongs to the ABC transporter superfamily.

The protein resides in the cell membrane. Its function is as follows. Probably part of an ABC transporter complex. Responsible for energy coupling to the transport system. The polypeptide is Putative ABC transporter ATP-binding protein MA_4020 (Methanosarcina acetivorans (strain ATCC 35395 / DSM 2834 / JCM 12185 / C2A)).